Consider the following 198-residue polypeptide: Orotate phosphoribosyltransferase (198 aa).

Residues Arg108, Lys109, Lys112, His114, and 135 to 143 (EDVVTTGKS) contribute to the 5-phospho-alpha-D-ribose 1-diphosphate site. Residues Thr139 and Arg167 each coordinate orotate.

The protein belongs to the purine/pyrimidine phosphoribosyltransferase family. PyrE subfamily. Homodimer. Requires Mg(2+) as cofactor.

It catalyses the reaction orotidine 5'-phosphate + diphosphate = orotate + 5-phospho-alpha-D-ribose 1-diphosphate. Its pathway is pyrimidine metabolism; UMP biosynthesis via de novo pathway; UMP from orotate: step 1/2. In terms of biological role, catalyzes the transfer of a ribosyl phosphate group from 5-phosphoribose 1-diphosphate to orotate, leading to the formation of orotidine monophosphate (OMP). This Synechocystis sp. (strain ATCC 27184 / PCC 6803 / Kazusa) protein is Orotate phosphoribosyltransferase.